Here is an 85-residue protein sequence, read N- to C-terminus: Cytochrome b (85 aa).

3 helical membrane passes run 1–8, 32–53, and 68–85; these read LTGLFLAM, WLIR…YLHI, and WNVG…AFVG. 2 residues coordinate heme b: H38 and H52.

Belongs to the cytochrome b family. As to quaternary structure, the cytochrome bc1 complex contains 3 respiratory subunits (MT-CYB, CYC1 and UQCRFS1), 2 core proteins (UQCRC1 and UQCRC2) and probably 6 low-molecular weight proteins. Heme b serves as cofactor.

The protein localises to the mitochondrion inner membrane. Its function is as follows. Component of the ubiquinol-cytochrome c reductase complex (complex III or cytochrome b-c1 complex) that is part of the mitochondrial respiratory chain. The b-c1 complex mediates electron transfer from ubiquinol to cytochrome c. Contributes to the generation of a proton gradient across the mitochondrial membrane that is then used for ATP synthesis. This is Cytochrome b (mt-cyb) from Pomoxis nigromaculatus (Black crappie).